The sequence spans 771 residues: Probable cation-transporting ATPase G (771 aa).

The HMA domain occupies 19 to 86 (GRMRVQATGF…AIIDAETVPA (68 aa)). Residues 72–92 (AAILSAIIDAETVPAAAVPAY) traverse the membrane as a helical segment. Positions 122–143 (DVAAQPSGETSDACCDGEDNED) are disordered. The next 5 helical transmembrane spans lie at 163-183 (VLLT…VVLG), 209-229 (VGVG…GELG), 330-350 (VFAG…ATAA), 387-407 (MIAA…LVWI), and 411-431 (LVVL…VTVV). Residue Asp-462 is the 4-aspartylphosphate intermediate of the active site. Residues Asp-651 and Asp-655 each contribute to the Mg(2+) site. Transmembrane regions (helical) follow at residues 657-677 (PALA…DVAI) and 716-736 (IITV…AVVL).

Belongs to the cation transport ATPase (P-type) (TC 3.A.3) family. Type IB subfamily.

Its subcellular location is the cell membrane. It catalyses the reaction ATP + H2O = ADP + phosphate + H(+). The protein is Probable cation-transporting ATPase G (ctpG) of Mycobacterium bovis (strain ATCC BAA-935 / AF2122/97).